Consider the following 129-residue polypeptide: Small ribosomal subunit protein eS8 (129 aa).

Residues 1 to 29 form a disordered region; it reads MSVWQGRSRRKPTGGLYRPARKKRKYEMG.

This sequence belongs to the eukaryotic ribosomal protein eS8 family. As to quaternary structure, part of the 30S ribosomal subunit.

The chain is Small ribosomal subunit protein eS8 (rps8e) from Methanocaldococcus jannaschii (strain ATCC 43067 / DSM 2661 / JAL-1 / JCM 10045 / NBRC 100440) (Methanococcus jannaschii).